The primary structure comprises 84 residues: U4-theraphotoxin-Hhn1a (84 aa).

Residues 1–22 (MKVTLIAILTCAAVLVLHTTAA) form the signal peptide. Positions 23–47 (EELEESQLMEVGMPDTELEAVDEER) are excised as a propeptide. Cystine bridges form between C51/C65, C55/C76, and C70/C81.

Belongs to the neurotoxin 12 (Hwtx-2) family. 02 (Hwtx-2) subfamily. As to expression, expressed by the venom gland.

The protein localises to the secreted. In terms of biological role, postsynaptic neurotoxin. The polypeptide is U4-theraphotoxin-Hhn1a (Cyriopagopus hainanus (Chinese bird spider)).